The chain runs to 426 residues: Testicular acid phosphatase (426 aa).

A signal peptide spans 1–26; the sequence is MAGLGFWGHPAGPLLLLLLLVLPPRA. The Extracellular segment spans residues 27 to 393; sequence LPEGPLVFVA…AAIPPAPVVP (367 aa). Residue His-41 is the Nucleophile of the active site. 3 disulfides stabilise this stretch: Cys-159/Cys-378, Cys-214/Cys-312, and Cys-353/Cys-357. 2 N-linked (GlcNAc...) asparagine glycosylation sites follow: Asn-191 and Asn-269. The Proton donor role is filled by Asp-289. N-linked (GlcNAc...) asparagine glycans are attached at residues Asn-330 and Asn-339. A helical transmembrane segment spans residues 394–414; the sequence is LLAGAVAVLVALSLGLGLLAW. The Cytoplasmic portion of the chain corresponds to 415–426; sequence RPGCLRALGGPV.

Belongs to the histidine acid phosphatase family. In terms of assembly, homodimer. In terms of processing, glycosylated. Expressed mainly in the testis. Also expressed in the brain where they are enriched at the postsynaptic sites. Expressed at lower levels in the trachea, prostate, bone marrow, spinal cord, colon, fetal brain, heart, thymus, fetal liver, spleen, leukocytes, ovary, small intestine, pancreas and skeletal muscle. Expression is significantly lower in testicular cancer tissues than in normal testicular tissues. Isoform 3 is expressed in the testis, trachea, prostate and bone marrow.

Its subcellular location is the membrane. It carries out the reaction a phosphate monoester + H2O = an alcohol + phosphate. May dephosphorylate receptor tyrosine-protein kinase ERBB4 and inhibits its ligand-induced proteolytic cleavage. May play a role in odontogenesis. The protein is Testicular acid phosphatase of Homo sapiens (Human).